Consider the following 312-residue polypeptide: tRNA pseudouridine synthase B (312 aa).

D49 functions as the Nucleophile in the catalytic mechanism.

Belongs to the pseudouridine synthase TruB family. Type 1 subfamily.

The enzyme catalyses uridine(55) in tRNA = pseudouridine(55) in tRNA. Functionally, responsible for synthesis of pseudouridine from uracil-55 in the psi GC loop of transfer RNAs. This is tRNA pseudouridine synthase B from Chelativorans sp. (strain BNC1).